Reading from the N-terminus, the 496-residue chain is MSDHQDGMKLEDIERQFLDVAQREGGLEAIQPTTGPLENEENLKSSTGGGGGEDDNDRKKRKRSRSRDRDTRRRSRSRDRGERRGGGGGGDRDRSRSRERRRGGGGRDEPRRRGGDDEARSRREPEPQKPREPKKYRFWDVPPTGFETTTPMEYKNMQAAGQVPRGSVQSAVPVVGPSVTCQSRRLYVGNIPFGCNEEAMLDFFNQQMHLCGLAQAPGNPILLCQINLDKNFAFIEFRSIDETTAGMAFDGINFMGQQLKVRRPRDYQPSQNTFDMNSRMPVSTIVVDSANKIFIGGLPNYLTEDQVKELLCSFGPLKAFSLNVDSQGNSKGYAFAEYLDPTLTDQAIAGLNGMQLGDKQLVVQLACANQQRHNTNLPNSASAIAGIDLSQGAGRATEILCLMNMVTEDELKADDEYEEILEDVRDECSKYGIVRSLEIPRPYEDHPVPGVGKVFVEFASTSDCQRAQAALTGRKFANRTVVTSYYDVDKYHNRQF.

Residues 1–26 (MSDHQDGMKLEDIERQFLDVAQREGG) are compositionally biased toward basic and acidic residues. A disordered region spans residues 1-142 (MSDHQDGMKL…PKKYRFWDVP (142 aa)). The segment covering 59–77 (KKRKRSRSRDRDTRRRSRS) has biased composition (basic residues). Basic and acidic residues-rich tracts occupy residues 78-96 (RDRG…DRSR) and 105-138 (GGRD…KYRF). RRM domains follow at residues 184–266 (RRLY…RPRD), 291–368 (NKIF…LACA), and 404–488 (NMVT…YYDV).

In terms of assembly, forms a heterodimer with the U2AF small subunit.

It localises to the nucleus. Its function is as follows. Necessary for the splicing of pre-mRNA. Binds to the polypyrimidine tract of introns early during spliceosome assembly. The sequence is that of Splicing factor U2AF 65 kDa subunit (uaf-1) from Caenorhabditis elegans.